The chain runs to 362 residues: Atypical chemokine receptor 3 (362 aa).

At 1 to 47 (MDVHLFDYAEPGNYSDINWPCNSSDCIVVDTVQCPTMPNKNVLLYTL) the chain is on the extracellular side. 2 N-linked (GlcNAc...) asparagine glycosylation sites follow: asparagine 13 and asparagine 22. The chain crosses the membrane as a helical span at residues 48–68 (SFIYIFIFVIGMIANSVVVWV). Over 69 to 81 (NIQAKTTGYDTHC) the chain is Cytoplasmic. Residues 82-102 (YILNLAIADLWVVITIPVWVV) traverse the membrane as a helical segment. The Extracellular portion of the chain corresponds to 103-118 (SLVQHNQWPMGELTCK). An intrachain disulfide couples cysteine 117 to cysteine 196. A helical membrane pass occupies residues 119 to 139 (ITHLIFSINLFGSIFFLACMS). The Cytoplasmic portion of the chain corresponds to 140–162 (VDRYLSITYFTGTSSYKKKMVRR). A helical membrane pass occupies residues 163-183 (VVCILVWLLAFFVSLPDTYYL). The Extracellular portion of the chain corresponds to 184 to 213 (KTVTSASNNETYCRSFYPEHSIKEWLIGME). Residues 214-234 (LVSVILGFAVPFTIIAIFYFL) traverse the membrane as a helical segment. At 235–252 (LARAMSASGDQEKHSSRK) the chain is on the cytoplasmic side. Residues 253–273 (IIFSYVVVFLVCWLPYHFVVL) form a helical membrane-spanning segment. The Extracellular portion of the chain corresponds to 274–296 (LDIFSILHYIPFTCQLENVLFTA). A helical transmembrane segment spans residues 297–319 (LHVTQCLSLVHCCVNPVLYSFIN). At 320 to 362 (RNYRYELMKAFIFKYSAKTGLTKLIDASRVSETEYSALEQNTK) the chain is on the cytoplasmic side. Residues 324 to 362 (YELMKAFIFKYSAKTGLTKLIDASRVSETEYSALEQNTK) are C-terminal cytoplasmic tail. A phosphoserine mark is found at serine 347, serine 350, and serine 355.

It belongs to the G-protein coupled receptor 1 family. Atypical chemokine receptor subfamily. As to quaternary structure, homodimer. Can form heterodimers with CXCR4; heterodimerization may regulate CXCR4 signaling activity. Interacts with ARRB1 and ARRB2. Post-translationally, the Ser/Thr residues in the C-terminal cytoplasmic tail may be phosphorylated. Ubiquitinated at the Lys residues in its C-terminal cytoplasmic tail and is essential for correct trafficking from and to the cell membrane. Deubiquitinated by CXCL12-stimulation in a reversible manner. Not detected in blood, liver, lung and heart, but high expression detected in several tumor cell lines (at protein level). Expressed in heart, spleen, kidney, lung, ovary, brain, testis, astrocytes, neutrophils and B-lymphocytes.

Its subcellular location is the cell membrane. It is found in the early endosome. It localises to the recycling endosome. Atypical chemokine receptor that controls chemokine levels and localization via high-affinity chemokine binding that is uncoupled from classic ligand-driven signal transduction cascades, resulting instead in chemokine sequestration, degradation, or transcytosis. Also known as interceptor (internalizing receptor) or chemokine-scavenging receptor or chemokine decoy receptor. Acts as a receptor for chemokines CXCL11 and CXCL12/SDF1. Chemokine binding does not activate G-protein-mediated signal transduction but instead induces beta-arrestin recruitment, leading to ligand internalization and activation of MAPK signaling pathway. Required for regulation of CXCR4 protein levels in migrating interneurons, thereby adapting their chemokine responsiveness. In glioma cells, transduces signals via MEK/ERK pathway, mediating resistance to apoptosis. Promotes cell growth and survival. Not involved in cell migration, adhesion or proliferation of normal hematopoietic progenitors but activated by CXCL11 in malignant hemapoietic cells, leading to phosphorylation of ERK1/2 (MAPK3/MAPK1) and enhanced cell adhesion and migration. Plays a regulatory role in CXCR4-mediated activation of cell surface integrins by CXCL12. Required for heart valve development. Regulates axon guidance in the oculomotor system through the regulation of CXCL12 levels. The polypeptide is Atypical chemokine receptor 3 (Mus musculus (Mouse)).